Here is a 133-residue protein sequence, read N- to C-terminus: Ubiquitin-like FUBI-ribosomal protein eS30 fusion protein (133 aa).

Residues 1–74 (MQLFVRAQEL…LEVAGRMLGG (74 aa)) enclose the Ubiquitin-like domain. A disordered region spans residues 84 to 110 (GKVRGQTPKVAKQEKKKKKTGRAKRRM). The segment covering 97-110 (EKKKKKTGRAKRRM) has biased composition (basic residues). The residue at position 125 (Lys125) is an N6-succinyllysine.

It in the N-terminal section; belongs to the ubiquitin family. In the C-terminal section; belongs to the eukaryotic ribosomal protein eS30 family. As to quaternary structure, component of the 40S subunit of the ribosome. In terms of processing, FUBI is cleaved from ribosomal protein S30 by the deubiquitinase USP36 before the assembly of ribosomal protein S30 into pre-40S ribosomal particles. FUBI removal from ribosomal protein S30 is a crucial event for the final maturation of pre-40S particles.

It is found in the cytoplasm. Its subcellular location is the nucleus. May have pro-apoptotic activity. Functionally, component of the 40S subunit of the ribosome. Contributes to the assembly and function of 40S ribosomal subunits. The chain is Ubiquitin-like FUBI-ribosomal protein eS30 fusion protein from Homo sapiens (Human).